The primary structure comprises 344 residues: Protein RecA (344 aa).

65–72 (GPESSGKT) provides a ligand contact to ATP.

It belongs to the RecA family.

The protein localises to the cytoplasm. Functionally, can catalyze the hydrolysis of ATP in the presence of single-stranded DNA, the ATP-dependent uptake of single-stranded DNA by duplex DNA, and the ATP-dependent hybridization of homologous single-stranded DNAs. It interacts with LexA causing its activation and leading to its autocatalytic cleavage. The protein is Protein RecA of Nitratiruptor sp. (strain SB155-2).